A 196-amino-acid polypeptide reads, in one-letter code: MAIDVKAIEEHIRGILIALGDNPEREGLKNTPKRVAKMYEEVFKGMCYSNDEIAEMFNVTFEDDLCINDNENDMVFMKEIEIFSHCEHHLALMYNMKVAIAYIPKKKIIGLSKIARIADMVGRRLQLQERIGSDIAEILQKVTDSEDVAVIIEGEHGCMTTRGIKKPGTKTITTTLRGKFNTDPIVSNKLMMLYTK.

Zn(2+) contacts are provided by cysteine 86, histidine 89, and cysteine 158.

Belongs to the GTP cyclohydrolase I family. As to quaternary structure, toroid-shaped homodecamer, composed of two pentamers of five dimers.

It catalyses the reaction GTP + H2O = 7,8-dihydroneopterin 3'-triphosphate + formate + H(+). Its pathway is cofactor biosynthesis; 7,8-dihydroneopterin triphosphate biosynthesis; 7,8-dihydroneopterin triphosphate from GTP: step 1/1. The protein is GTP cyclohydrolase 1 of Clostridium botulinum (strain Langeland / NCTC 10281 / Type F).